The chain runs to 573 residues: Proline--tRNA ligase (573 aa).

The protein belongs to the class-II aminoacyl-tRNA synthetase family. ProS type 1 subfamily. As to quaternary structure, homodimer.

The protein localises to the cytoplasm. It carries out the reaction tRNA(Pro) + L-proline + ATP = L-prolyl-tRNA(Pro) + AMP + diphosphate. Functionally, catalyzes the attachment of proline to tRNA(Pro) in a two-step reaction: proline is first activated by ATP to form Pro-AMP and then transferred to the acceptor end of tRNA(Pro). As ProRS can inadvertently accommodate and process non-cognate amino acids such as alanine and cysteine, to avoid such errors it has two additional distinct editing activities against alanine. One activity is designated as 'pretransfer' editing and involves the tRNA(Pro)-independent hydrolysis of activated Ala-AMP. The other activity is designated 'posttransfer' editing and involves deacylation of mischarged Ala-tRNA(Pro). The misacylated Cys-tRNA(Pro) is not edited by ProRS. This Limosilactobacillus fermentum (strain NBRC 3956 / LMG 18251) (Lactobacillus fermentum) protein is Proline--tRNA ligase.